We begin with the raw amino-acid sequence, 187 residues long: Peptide methionine sulfoxide reductase A2-1 (187 aa).

The protein belongs to the MsrA Met sulfoxide reductase family.

The protein resides in the cytoplasm. The protein localises to the cytosol. It catalyses the reaction L-methionyl-[protein] + [thioredoxin]-disulfide + H2O = L-methionyl-(S)-S-oxide-[protein] + [thioredoxin]-dithiol. The catalysed reaction is [thioredoxin]-disulfide + L-methionine + H2O = L-methionine (S)-S-oxide + [thioredoxin]-dithiol. Its function is as follows. Catalyzes the reduction of methionine sulfoxide (MetSO) to methionine in proteins. Plays a protective role against oxidative stress by restoring activity to proteins that have been inactivated by methionine oxidation. MSRA family specifically reduces the MetSO S-enantiomer. The protein is Peptide methionine sulfoxide reductase A2-1 (MSRA2-1) of Oryza sativa subsp. japonica (Rice).